The sequence spans 218 residues: Deoxyribose-phosphate aldolase (218 aa).

Catalysis depends on Asp-92, which acts as the Proton donor/acceptor. Lys-156 serves as the catalytic Schiff-base intermediate with acetaldehyde. Lys-185 serves as the catalytic Proton donor/acceptor.

This sequence belongs to the DeoC/FbaB aldolase family. DeoC type 1 subfamily.

It localises to the cytoplasm. It carries out the reaction 2-deoxy-D-ribose 5-phosphate = D-glyceraldehyde 3-phosphate + acetaldehyde. It functions in the pathway carbohydrate degradation; 2-deoxy-D-ribose 1-phosphate degradation; D-glyceraldehyde 3-phosphate and acetaldehyde from 2-deoxy-alpha-D-ribose 1-phosphate: step 2/2. Catalyzes a reversible aldol reaction between acetaldehyde and D-glyceraldehyde 3-phosphate to generate 2-deoxy-D-ribose 5-phosphate. This is Deoxyribose-phosphate aldolase from Desulfitobacterium hafniense (strain DSM 10664 / DCB-2).